A 252-amino-acid chain; its full sequence is Large ribosomal subunit protein uL4 (252 aa).

Belongs to the universal ribosomal protein uL4 family. In terms of assembly, part of the 50S ribosomal subunit.

In terms of biological role, one of the primary rRNA binding proteins, this protein initially binds near the 5'-end of the 23S rRNA. It is important during the early stages of 50S assembly. It makes multiple contacts with different domains of the 23S rRNA in the assembled 50S subunit and ribosome. Functionally, forms part of the polypeptide exit tunnel. The protein is Large ribosomal subunit protein uL4 of Methanocaldococcus jannaschii (strain ATCC 43067 / DSM 2661 / JAL-1 / JCM 10045 / NBRC 100440) (Methanococcus jannaschii).